The following is a 251-amino-acid chain: HTH-type transcriptional regulator UlaR (251 aa).

An HTH deoR-type domain is found at 3–58 (EAQRHQILLEMLAQLGFVTVEKVVERLGISPATARRDINKLDESGKLKKVRNGAEA). A DNA-binding region (H-T-H motif) is located at residues 20–39 (VTVEKVVERLGISPATARRD).

It is found in the cytoplasm. In terms of biological role, represses ulaG and the ulaABCDEF operon. The chain is HTH-type transcriptional regulator UlaR from Escherichia coli (strain SMS-3-5 / SECEC).